A 283-amino-acid polypeptide reads, in one-letter code: Acetylglutamate kinase (283 aa).

Substrate is bound by residues 63–64 (GG), Arg85, and Asn178.

Belongs to the acetylglutamate kinase family. ArgB subfamily.

The protein resides in the cytoplasm. It catalyses the reaction N-acetyl-L-glutamate + ATP = N-acetyl-L-glutamyl 5-phosphate + ADP. It functions in the pathway amino-acid biosynthesis; L-arginine biosynthesis; N(2)-acetyl-L-ornithine from L-glutamate: step 2/4. Functionally, catalyzes the ATP-dependent phosphorylation of N-acetyl-L-glutamate. The protein is Acetylglutamate kinase of Prochlorococcus marinus (strain MIT 9515).